The following is an 893-amino-acid chain: Alanine--tRNA ligase (893 aa).

Residues histidine 574, histidine 578, cysteine 678, and histidine 682 each contribute to the Zn(2+) site.

It belongs to the class-II aminoacyl-tRNA synthetase family. Zn(2+) serves as cofactor.

The protein localises to the cytoplasm. The enzyme catalyses tRNA(Ala) + L-alanine + ATP = L-alanyl-tRNA(Ala) + AMP + diphosphate. Catalyzes the attachment of alanine to tRNA(Ala) in a two-step reaction: alanine is first activated by ATP to form Ala-AMP and then transferred to the acceptor end of tRNA(Ala). Also edits incorrectly charged Ser-tRNA(Ala) and Gly-tRNA(Ala) via its editing domain. The protein is Alanine--tRNA ligase of Bifidobacterium longum (strain NCC 2705).